Here is a 468-residue protein sequence, read N- to C-terminus: Protein ABHD15 (468 aa).

The signal sequence occupies residues 1-23 (MPPWGAALALILAVLALLGLLGP). Residues 33-61 (VGERTLPGAQDRDDGEEADGGGPADQFSD) form a disordered region. Residues D360 and H391 each act as charge relay system in the active site. A Phosphoserine modification is found at S434.

It belongs to the AB hydrolase superfamily. AB hydrolase 4 family. In terms of assembly, interacts with PDE3B; this interaction regulates PDE3B's stability and expression and, thereby, impacts the antilipolytic action of insulin.

It is found in the secreted. Functionally, may regulate adipocyte lipolysis and liver lipid accumulation. The protein is Protein ABHD15 of Homo sapiens (Human).